Consider the following 196-residue polypeptide: Protein GrpE (196 aa).

A disordered region spans residues 1–41 (MSSKEQKTPEGQAPEEIITEQHDDVEAVEPEVSAEQVDPRD).

Belongs to the GrpE family. As to quaternary structure, homodimer.

Its subcellular location is the cytoplasm. Functionally, participates actively in the response to hyperosmotic and heat shock by preventing the aggregation of stress-denatured proteins, in association with DnaK and GrpE. It is the nucleotide exchange factor for DnaK and may function as a thermosensor. Unfolded proteins bind initially to DnaJ; upon interaction with the DnaJ-bound protein, DnaK hydrolyzes its bound ATP, resulting in the formation of a stable complex. GrpE releases ADP from DnaK; ATP binding to DnaK triggers the release of the substrate protein, thus completing the reaction cycle. Several rounds of ATP-dependent interactions between DnaJ, DnaK and GrpE are required for fully efficient folding. The protein is Protein GrpE of Klebsiella pneumoniae subsp. pneumoniae (strain ATCC 700721 / MGH 78578).